The following is a 183-amino-acid chain: Capsid protein (183 aa).

Residues 136 to 183 (NAPILSTLPETTVVRRRGRSPRRRTPSPRRRRSQSPRRRRSQSRESQC) are disordered. Residues 149–176 (VRRRGRSPRRRTPSPRRRRSQSPRRRRS) show a composition bias toward basic residues. Phosphoserine; by host occurs at positions 155, 162, and 170. The 1; half-length repeat unit spans residues 155 to 161 (SPRRRTP). The interval 155–177 (SPRRRTPSPRRRRSQSPRRRRSQ) is 3 X 8 AA repeats of S-P-R-R-R-[PR]-S-Q. Positions 158–175 (RRTPSPRRRRSQSPRRRR) match the Bipartite nuclear localization signal motif. 2 tandem repeats follow at residues 162–169 (SPRRRRSQ) and 170–177 (SPRRRRSQ). Positions 177–183 (QSRESQC) are RNA binding.

Belongs to the orthohepadnavirus core antigen family. Homodimerizes, then multimerizes. Interacts with cytosol exposed regions of viral L glycoprotein present in the reticulum-to-Golgi compartment. Interacts with human FLNB. Phosphorylated form interacts with host importin alpha; this interaction depends on the exposure of the NLS, which itself depends upon genome maturation and/or phosphorylation of the capsid protein. Interacts with host NUP153. Phosphorylated by host SRPK1, SRPK2, and maybe protein kinase C or GAPDH. Phosphorylation is critical for pregenomic RNA packaging. Protein kinase C phosphorylation is stimulated by HBx protein and may play a role in transport of the viral genome to the nucleus at the late step during the viral replication cycle.

It localises to the virion. Its subcellular location is the host cytoplasm. Self assembles to form an icosahedral capsid. Most capsids appear to be large particles with an icosahedral symmetry of T=4 and consist of 240 copies of capsid protein, though a fraction forms smaller T=3 particles consisting of 180 capsid proteins. Entering capsids are transported along microtubules to the nucleus. Phosphorylation of the capsid is thought to induce exposure of nuclear localization signal in the C-terminal portion of the capsid protein that allows binding to the nuclear pore complex via the importin (karyopherin-) alpha and beta. Capsids are imported in intact form through the nuclear pore into the nuclear basket, where it probably binds NUP153. Only capsids that contain the mature viral genome can release the viral DNA and capsid protein into the nucleoplasm. Immature capsids get stuck in the basket. Capsids encapsulate the pre-genomic RNA and the P protein. Pre-genomic RNA is reverse-transcribed into DNA while the capsid is still in the cytoplasm. The capsid can then either be directed to the nucleus, providing more genomes for transcription, or bud through the endoplasmic reticulum to provide new virions. The polypeptide is Capsid protein (Hepatitis B virus genotype B2 (isolate Indonesia/pIDW420/1988) (HBV-B)).